A 424-amino-acid chain; its full sequence is Serine hydroxymethyltransferase 2 (424 aa).

Residues Leu-125 and 129 to 131 (GHL) each bind (6S)-5,6,7,8-tetrahydrofolate. N6-(pyridoxal phosphate)lysine is present on Lys-234. Glu-250 contacts (6S)-5,6,7,8-tetrahydrofolate.

This sequence belongs to the SHMT family. As to quaternary structure, homodimer. The cofactor is pyridoxal 5'-phosphate.

Its subcellular location is the cytoplasm. It carries out the reaction (6R)-5,10-methylene-5,6,7,8-tetrahydrofolate + glycine + H2O = (6S)-5,6,7,8-tetrahydrofolate + L-serine. Its pathway is one-carbon metabolism; tetrahydrofolate interconversion. The protein operates within amino-acid biosynthesis; glycine biosynthesis; glycine from L-serine: step 1/1. Functionally, catalyzes the reversible interconversion of serine and glycine with tetrahydrofolate (THF) serving as the one-carbon carrier. This reaction serves as the major source of one-carbon groups required for the biosynthesis of purines, thymidylate, methionine, and other important biomolecules. Also exhibits THF-independent aldolase activity toward beta-hydroxyamino acids, producing glycine and aldehydes, via a retro-aldol mechanism. The chain is Serine hydroxymethyltransferase 2 from Ralstonia nicotianae (strain ATCC BAA-1114 / GMI1000) (Ralstonia solanacearum).